A 124-amino-acid polypeptide reads, in one-letter code: uncharacterized protein (124 aa).

An N-terminal signal peptide occupies residues 1-23; that stretch reads MHKLLKLLSITLIGLSVATGVQA.

This sequence belongs to the cytochrome b562 family.

This is an uncharacterized protein from Pasteurella multocida (strain Pm70).